The sequence spans 257 residues: Zinc transporter ZupT (257 aa).

The next 8 membrane-spanning stretches (helical) occupy residues 5–25 (LILT…GVLG), 32–52 (LLAF…LMEM), 61–81 (GMSP…YFGL), 109–129 (AILL…ATFV), 137–157 (LGFG…LAVA), 171–191 (ILWA…AWLI), 195–215 (MISP…MVAL), and 236–256 (GVLC…TAGI). Positions 120 and 123 each coordinate Fe(2+). The Zn(2+) site is built by Glu-123 and His-148. The Fe(2+) site is built by Asn-149, Glu-152, and Glu-181. Glu-152 contacts Zn(2+).

The protein belongs to the ZIP transporter (TC 2.A.5) family. ZupT subfamily.

The protein resides in the cell inner membrane. It carries out the reaction Zn(2+)(in) = Zn(2+)(out). In terms of biological role, mediates zinc uptake. May also transport other divalent cations. The polypeptide is Zinc transporter ZupT (Shigella flexneri serotype 5b (strain 8401)).